Here is a 515-residue protein sequence, read N- to C-terminus: mRNA export factor ICP27 homolog (515 aa).

Residues cysteine 230, histidine 335, cysteine 337, and cysteine 342 each contribute to the Zn(2+) site. The segment at cysteine 230–cysteine 342 adopts a CHC2-type zinc-finger fold. The segment covering tyrosine 398 to serine 408 has biased composition (polar residues). Positions tyrosine 398–serine 422 are disordered. The span at histidine 409–serine 422 shows a compositional bias: basic residues.

It belongs to the HHV-1 ICP27 protein family.

Its subcellular location is the virion tegument. It is found in the virion. The protein localises to the host nucleus. It localises to the host cytoplasm. Its function is as follows. Immediate early (EI) protein that plays many roles during productive infection including regulation of viral gene expression and nuclear export of intronless viral RNAs. The polypeptide is mRNA export factor ICP27 homolog (Human herpesvirus 6A (strain Uganda-1102) (HHV-6 variant A)).